A 333-amino-acid chain; its full sequence is Tetraacyldisaccharide 4'-kinase (333 aa).

Residue Ile-57–Thr-64 coordinates ATP.

This sequence belongs to the LpxK family.

The catalysed reaction is a lipid A disaccharide + ATP = a lipid IVA + ADP + H(+). Its pathway is glycolipid biosynthesis; lipid IV(A) biosynthesis; lipid IV(A) from (3R)-3-hydroxytetradecanoyl-[acyl-carrier-protein] and UDP-N-acetyl-alpha-D-glucosamine: step 6/6. Transfers the gamma-phosphate of ATP to the 4'-position of a tetraacyldisaccharide 1-phosphate intermediate (termed DS-1-P) to form tetraacyldisaccharide 1,4'-bis-phosphate (lipid IVA). The polypeptide is Tetraacyldisaccharide 4'-kinase (Dechloromonas aromatica (strain RCB)).